A 2145-amino-acid polypeptide reads, in one-letter code: Glutamate synthase [NADH] (2145 aa).

A propeptide spanning residues 1 to 53 (MPVLKSDNFDPLEEAYEGGTIQNYNDEHHLHKSWANVIPDKRGLYDPDYEHDA) is cleaved from the precursor. Residue Cys54 is the For GATase activity of the active site. Positions 54-455 (CGVGFVANKH…PGDLFLVDTQ (402 aa)) constitute a Glutamine amidotransferase type-2 domain. 1132-1189 (LAETHQTLVLNDLRRNVVVQTDGQLRTGFDIAVAVLLGAESFTLATVPLIAMGCVMLR) contributes to the FMN binding site. [3Fe-4S] cluster is bound by residues Cys1185, Cys1191, and Cys1196. Residues 1551–1600 (KKVLLKEKAEAAKAKAKATSEYLKKFRSNQEVDDEVNTLLIANQKAKEQE) are a coiled coil. An NAD(+)-binding site is contributed by 1928–1942 (GGGDTGNDCLGTSVR). At Thr2070 the chain carries Phosphothreonine.

This sequence belongs to the glutamate synthase family. In terms of assembly, homotrimer. [3Fe-4S] cluster is required as a cofactor. The cofactor is FAD. Requires FMN as cofactor.

It carries out the reaction 2 L-glutamate + NAD(+) = L-glutamine + 2-oxoglutarate + NADH + H(+). It participates in amino-acid biosynthesis; L-glutamate biosynthesis via GLT pathway; L-glutamate from 2-oxoglutarate and L-glutamine (NAD(+) route): step 1/1. The protein operates within energy metabolism; nitrogen metabolism. Inhibited by homocysteine sulfonamide. Its function is as follows. Forms L-glutamate from L-glutamine and 2-oxoglutarate. Represents an alternative pathway to L-glutamate dehydrogenase for the biosynthesis of L-glutamate. Participates with glutamine synthetase in ammonia assimilation processes. The enzyme is specific for NADH, L-glutamine and 2-oxoglutarate. This chain is Glutamate synthase [NADH] (GLT1), found in Saccharomyces cerevisiae (strain ATCC 204508 / S288c) (Baker's yeast).